The following is a 2313-amino-acid chain: Histone-lysine N-methyltransferase Set2 (2313 aa).

Disordered regions lie at residues 1–115, 179–442, 550–858, 883–1106, 1118–1150, and 1163–1251; these read MEES…ASTS, AVGG…EETF, EPPL…LKAK, RLDE…KKAL, ETES…PFGD, and KRDK…SQGR. The a.T hook 1 DNA-binding region spans 17-29; sequence GRGRGRPPKVALS. Residues 73–82 show a composition bias toward basic and acidic residues; sequence IKFDVRDLLN. Residues 101–115 show a composition bias toward low complexity; the sequence is STGHSQSGTTAASTS. The segment at residues 197-209 is a DNA-binding region (a.T hook 2); that stretch reads PRKRGRPRKSQLA. Over residues 221–241 the composition is skewed to low complexity; it reads SCSDSDTNSTSTTTSNMSSDS. The segment covering 252–265 has biased composition (basic residues); the sequence is PKSKLRVSLKRLKL. Positions 266 to 288 are enriched in low complexity; it reads GGRLESSDSGNSPSSSSPEVEPP. A compositionally biased stretch (basic and acidic residues) spans 330-345; it reads ESPKGEEEQEEGRPVE. 3 stretches are compositionally biased toward acidic residues: residues 347–356, 365–375, and 388–398; these read EPQDLIDIDM, PDPEEDLDEIM, and ADDEAEEEEDA. Thr-404 is subject to Phosphothreonine. Over residues 412–433 the composition is skewed to low complexity; that stretch reads ADSCSSAPRRSRRSAPLSGSSR. Residues 552–563 show a composition bias toward basic and acidic residues; the sequence is PLKDESDPKQTE. Positions 659-671 are enriched in acidic residues; sequence EDYESNQEQVAED. Polar residues predominate over residues 676–685; it reads CNNQKGQKQT. Basic and acidic residues-rich tracts occupy residues 689-708, 719-732, 740-749, and 758-782; these read EMKE…EKAM, VDKK…EKKV, VPEKKMDSKK, and KQKE…KSSA. 2 positions are modified to phosphoserine: Ser-786 and Ser-788. 3 stretches are compositionally biased toward polar residues: residues 800–833, 918–928, and 938–955; these read AQWS…SNQP, KSLSGKTSLRR, and LERN…NTSA. Over residues 959–969 the composition is skewed to basic residues; sequence KPSKVKKKINP. A compositionally biased stretch (low complexity) spans 997–1010; it reads SSPVSTSSDSSSKR. Over residues 1016–1039 the composition is skewed to basic and acidic residues; sequence TTSDLDGGSKLDQRRYTICEDRQP. Low complexity-rich tracts occupy residues 1085–1097 and 1118–1127; these read SRQN…SSAS and ETESSESTSS. Positions 1163-1183 are enriched in basic and acidic residues; that stretch reads KRDKVDEDQRKEGQDEVKREA. Residues 1199-1213 are compositionally biased toward low complexity; it reads TPATTPTPSPTQSNP. An AWS domain is found at 1307 to 1360; sequence NAEMQCDCFLTGDEEAQGHLSCGAGCINRMLMIECGPLCSNGARCTNKRFQQHQ. Zn(2+)-binding residues include Cys-1312, Cys-1314, Cys-1328, Cys-1332, Cys-1341, Cys-1345, and Cys-1351. One can recognise an SET domain in the interval 1362–1479; the sequence is WPCRVFRTEK…PGEEITFDYQ (118 aa). S-adenosyl-L-methionine contacts are provided by residues 1415 to 1417 and 1440 to 1441; these read HYY and NH. Cys-1443 provides a ligand contact to Zn(2+). Residues 1486–1502 form the Post-SET domain; the sequence is DAQRCYCEAANCRGWIG. Position 1488 (Gln-1488) interacts with S-adenosyl-L-methionine. Zn(2+) is bound at residue Cys-1490. Tyr-1491 lines the S-adenosyl-L-methionine pocket. Zn(2+) is bound by residues Cys-1492 and Cys-1497. Disordered regions lie at residues 1501 to 1598 and 1763 to 1860; these read IGGE…KPKV and MKEH…RRTL. Positions 1505–1534 are enriched in acidic residues; that stretch reads PDSDEGEQLDEESDSDAEMDEEELEAEPEE. Residues 1539-1551 are compositionally biased toward basic residues; it reads KSAKAKAKSKLKA. Basic and acidic residues-rich tracts occupy residues 1564-1574, 1763-1774, and 1784-1806; these read QTKPKDREYKA, MKEHEREADRQQ, and EDQR…RDTT. A compositionally biased stretch (polar residues) spans 1817-1832; the sequence is SGNNTICTITTQQKGS. A compositionally biased stretch (basic and acidic residues) spans 1840–1860; that stretch reads TRNDNRRRSDIGPPSEQRRTL. The WW domain occupies 1963–1996; sequence DPLPPAWNWQVTSDGDIYYYNLRERISQWEPPSP. Ser-2130 and Ser-2131 each carry phosphoserine. Residues 2177 to 2218 are disordered; it reads LGTVGKRKLPMPPSVTVKKHRQEQRSKKVKSSQSPLTATSAR. Positions 2193-2206 are enriched in basic residues; it reads VKKHRQEQRSKKVK. A compositionally biased stretch (polar residues) spans 2207–2216; sequence SSQSPLTATS.

It belongs to the class V-like SAM-binding methyltransferase superfamily. Histone-lysine methyltransferase family. SET2 subfamily. As to quaternary structure, interacts with (phosphorylated) Polr2A.

It is found in the nucleus. The protein resides in the chromosome. The catalysed reaction is L-lysyl(36)-[histone H3] + 3 S-adenosyl-L-methionine = N(6),N(6),N(6)-trimethyl-L-lysyl(36)-[histone H3] + 3 S-adenosyl-L-homocysteine + 3 H(+). Histone methyltransferase that specifically trimethylates 'Lys-36' of histone H3 (H3K36me3). Represents the main enzyme generating H3K36me3, a specific tag for epigenetic transcriptional activation. Involved in dosage compensation in males (X chromosome dosage compensation) by mediating formation of H3K36me3, a mark recognized by msl-3 component of the MSL complex. In addition to its role in dosage compensation in males, promotes germline stem cell differentiation in females: catalyzes formation of H3K36me3, promoting recruitment of msl-3 and subsequent recruitment of the ATAC complex, leading to transcription of genes, such as RpS19b. This is Histone-lysine N-methyltransferase Set2 from Drosophila melanogaster (Fruit fly).